The primary structure comprises 462 residues: Probable alcohol acetyltransferase crmB (462 aa).

It belongs to the alcohol acetyltransferase FCK4 family.

It functions in the pathway secondary metabolite biosynthesis. In terms of biological role, probable alcohol acetyltransferase; part of the crm gene cluster that mediates the biosynthesis of a yet unidentified copper-responsive metabolite. In contrast to crmA, is not involved in the biosynthesis of fumivalines or fumicicolins. The chain is Probable alcohol acetyltransferase crmB from Aspergillus fumigatus (strain ATCC MYA-4609 / CBS 101355 / FGSC A1100 / Af293) (Neosartorya fumigata).